Here is a 234-residue protein sequence, read N- to C-terminus: Opacity protein opA65 (234 aa).

A signal peptide is located at residue alanine 1. The interval 154-179 (TVTPKPKNGTQGGPVKSTSPIPAYHE) is disordered.

This sequence belongs to the opacity porin family.

The protein resides in the cell outer membrane. Its function is as follows. Implicated in a number of adherence functions. OPA proteins are implicated in pathogenesis and are subject to phase variation. The protein is Opacity protein opA65 of Neisseria gonorrhoeae.